A 312-amino-acid polypeptide reads, in one-letter code: Ribonuclease Z (312 aa).

Zn(2+)-binding residues include His62, His64, Asp66, His67, His144, Asp215, and His273. The Proton acceptor role is filled by Asp66.

This sequence belongs to the RNase Z family. As to quaternary structure, homodimer. Zn(2+) serves as cofactor.

It carries out the reaction Endonucleolytic cleavage of RNA, removing extra 3' nucleotides from tRNA precursor, generating 3' termini of tRNAs. A 3'-hydroxy group is left at the tRNA terminus and a 5'-phosphoryl group is left at the trailer molecule.. Functionally, zinc phosphodiesterase, which displays some tRNA 3'-processing endonuclease activity. Probably involved in tRNA maturation, by removing a 3'-trailer from precursor tRNA. This Prochlorococcus marinus subsp. pastoris (strain CCMP1986 / NIES-2087 / MED4) protein is Ribonuclease Z.